The sequence spans 691 residues: Hormonally up-regulated neu tumor-associated kinase homolog A (691 aa).

Residues 55-313 (YLIGRKLGEG…IQQALANRWL (259 aa)) form the Protein kinase domain. ATP is bound by residues 61–69 (LGEGSFAKV) and K84. D179 (proton acceptor) is an active-site residue. The span at 406–425 (MNKNSYEERRSKDLEKRGEP) shows a compositional bias: basic and acidic residues. 4 disordered regions span residues 406-475 (MNKN…GGLS), 499-518 (QSPDPRTPKIMRRQDSHSQE), 580-640 (FQFD…SRGR), and 655-679 (QVVSPKGEKPLETRMPPLHQMSPGY). Positions 440–453 (SHRQNACLTPQGHS) are enriched in polar residues. Residues 457–470 (PVKERRSSKSERES) show a composition bias toward basic and acidic residues. Over residues 582–597 (FDNTSPSKSHFNQASF) the composition is skewed to polar residues. Residues 604 to 620 (SPSSPESMSPTSPHSPS) are compositionally biased toward low complexity. Over residues 621 to 631 (CNNNISGNLGS) the composition is skewed to polar residues.

The protein belongs to the protein kinase superfamily. CAMK Ser/Thr protein kinase family. SNF1 subfamily.

The catalysed reaction is L-seryl-[protein] + ATP = O-phospho-L-seryl-[protein] + ADP + H(+). It catalyses the reaction L-threonyl-[protein] + ATP = O-phospho-L-threonyl-[protein] + ADP + H(+). This is Hormonally up-regulated neu tumor-associated kinase homolog A (hunk-a) from Xenopus laevis (African clawed frog).